A 350-amino-acid chain; its full sequence is Ion-translocating oxidoreductase complex subunit D (350 aa).

Transmembrane regions (helical) follow at residues Tyr-37–Ala-57, Ala-68–Ala-88, Ile-89–Val-109, and Ile-120–Thr-140. Thr-185 is subject to FMN phosphoryl threonine. The next 5 helical transmembrane spans lie at Gly-212–Leu-232, Trp-239–Leu-259, Val-265–Thr-285, Ala-291–Ile-311, and Gly-315–Ile-335.

The protein belongs to the NqrB/RnfD family. The complex is composed of six subunits: RnfA, RnfB, RnfC, RnfD, RnfE and RnfG. FMN serves as cofactor.

The protein localises to the cell inner membrane. Its function is as follows. Part of a membrane-bound complex that couples electron transfer with translocation of ions across the membrane. This chain is Ion-translocating oxidoreductase complex subunit D, found in Shewanella pealeana (strain ATCC 700345 / ANG-SQ1).